The chain runs to 78 residues: MAKAAVRKPKKKVCVFCKDKVDYIDFKDTSLLRKYISDRGKIRARRVSGNCSQHQRDVATAVKNSREMALLPYTASAR.

It belongs to the bacterial ribosomal protein bS18 family. In terms of assembly, part of the 30S ribosomal subunit. Forms a tight heterodimer with protein bS6.

In terms of biological role, binds as a heterodimer with protein bS6 to the central domain of the 16S rRNA, where it helps stabilize the platform of the 30S subunit. This is Small ribosomal subunit protein bS18 from Frankia casuarinae (strain DSM 45818 / CECT 9043 / HFP020203 / CcI3).